We begin with the raw amino-acid sequence, 376 residues long: Probable low-specificity L-threonine aldolase (376 aa).

Residues 1–21 show a composition bias toward polar residues; it reads MSGSVTSTTTETRLCPSNQGS. The tract at residues 1–22 is disordered; that stretch reads MSGSVTSTTTETRLCPSNQGSA. Position 226 is an N6-(pyridoxal phosphate)lysine (Lys226).

Belongs to the threonine aldolase family. In terms of assembly, homotetramer. Requires pyridoxal 5'-phosphate as cofactor.

The enzyme catalyses L-threonine = acetaldehyde + glycine. The catalysed reaction is L-allo-threonine = acetaldehyde + glycine. It functions in the pathway amino-acid degradation; L-threonine degradation via aldolase pathway; acetaldehyde and glycine from L-threonine: step 1/1. The sequence is that of Probable low-specificity L-threonine aldolase (gly1) from Schizosaccharomyces pombe (strain 972 / ATCC 24843) (Fission yeast).